We begin with the raw amino-acid sequence, 343 residues long: Holliday junction branch migration complex subunit RuvB (343 aa).

A disordered region spans residues 1–26 (MKEKILTFSSDPSSPVTRHETEEDTG). Residues 3–193 (EKILTFSSDP…FGIFRKFDFY (191 aa)) are large ATPase domain (RuvB-L). Over residues 7-16 (TFSSDPSSPV) the composition is skewed to polar residues. Residues Leu32, Arg33, Gly74, Lys77, Thr78, Thr79, 140-142 (EDF), Arg183, Tyr193, and Arg230 each bind ATP. Thr78 contributes to the Mg(2+) binding site. Residues 194 to 264 (SRQDLARIVS…AIDDALALEG (71 aa)) form a small ATPAse domain (RuvB-S) region. A head domain (RuvB-H) region spans residues 267–343 (EKGLTGLDRS…YRHLGVQWRG (77 aa)). Arg322 and Arg327 together coordinate DNA.

Belongs to the RuvB family. Homohexamer. Forms an RuvA(8)-RuvB(12)-Holliday junction (HJ) complex. HJ DNA is sandwiched between 2 RuvA tetramers; dsDNA enters through RuvA and exits via RuvB. An RuvB hexamer assembles on each DNA strand where it exits the tetramer. Each RuvB hexamer is contacted by two RuvA subunits (via domain III) on 2 adjacent RuvB subunits; this complex drives branch migration. In the full resolvosome a probable DNA-RuvA(4)-RuvB(12)-RuvC(2) complex forms which resolves the HJ.

It is found in the cytoplasm. It carries out the reaction ATP + H2O = ADP + phosphate + H(+). The RuvA-RuvB-RuvC complex processes Holliday junction (HJ) DNA during genetic recombination and DNA repair, while the RuvA-RuvB complex plays an important role in the rescue of blocked DNA replication forks via replication fork reversal (RFR). RuvA specifically binds to HJ cruciform DNA, conferring on it an open structure. The RuvB hexamer acts as an ATP-dependent pump, pulling dsDNA into and through the RuvAB complex. RuvB forms 2 homohexamers on either side of HJ DNA bound by 1 or 2 RuvA tetramers; 4 subunits per hexamer contact DNA at a time. Coordinated motions by a converter formed by DNA-disengaged RuvB subunits stimulates ATP hydrolysis and nucleotide exchange. Immobilization of the converter enables RuvB to convert the ATP-contained energy into a lever motion, pulling 2 nucleotides of DNA out of the RuvA tetramer per ATP hydrolyzed, thus driving DNA branch migration. The RuvB motors rotate together with the DNA substrate, which together with the progressing nucleotide cycle form the mechanistic basis for DNA recombination by continuous HJ branch migration. Branch migration allows RuvC to scan DNA until it finds its consensus sequence, where it cleaves and resolves cruciform DNA. This is Holliday junction branch migration complex subunit RuvB from Desulfosudis oleivorans (strain DSM 6200 / JCM 39069 / Hxd3) (Desulfococcus oleovorans).